The chain runs to 346 residues: Biotin synthase (346 aa).

Positions 38-256 (RQVQVSTLLS…IAVARIMMPT (219 aa)) constitute a Radical SAM core domain. The [4Fe-4S] cluster site is built by Cys53, Cys57, and Cys60. [2Fe-2S] cluster contacts are provided by Cys97, Cys128, Cys188, and Arg260.

This sequence belongs to the radical SAM superfamily. Biotin synthase family. As to quaternary structure, homodimer. Requires [4Fe-4S] cluster as cofactor. [2Fe-2S] cluster is required as a cofactor.

It carries out the reaction (4R,5S)-dethiobiotin + (sulfur carrier)-SH + 2 reduced [2Fe-2S]-[ferredoxin] + 2 S-adenosyl-L-methionine = (sulfur carrier)-H + biotin + 2 5'-deoxyadenosine + 2 L-methionine + 2 oxidized [2Fe-2S]-[ferredoxin]. The protein operates within cofactor biosynthesis; biotin biosynthesis; biotin from 7,8-diaminononanoate: step 2/2. Functionally, catalyzes the conversion of dethiobiotin (DTB) to biotin by the insertion of a sulfur atom into dethiobiotin via a radical-based mechanism. The chain is Biotin synthase from Cronobacter sakazakii (strain ATCC BAA-894) (Enterobacter sakazakii).